The primary structure comprises 114 residues: Aspartate 1-decarboxylase (114 aa).

Residue serine 25 is the Schiff-base intermediate with substrate; via pyruvic acid of the active site. Serine 25 carries the post-translational modification Pyruvic acid (Ser). Position 57 (threonine 57) interacts with substrate. Tyrosine 58 functions as the Proton donor in the catalytic mechanism. Residue 73–75 (GAA) coordinates substrate.

This sequence belongs to the PanD family. In terms of assembly, heterooctamer of four alpha and four beta subunits. Requires pyruvate as cofactor. In terms of processing, is synthesized initially as an inactive proenzyme, which is activated by self-cleavage at a specific serine bond to produce a beta-subunit with a hydroxyl group at its C-terminus and an alpha-subunit with a pyruvoyl group at its N-terminus.

The protein localises to the cytoplasm. It carries out the reaction L-aspartate + H(+) = beta-alanine + CO2. Its pathway is cofactor biosynthesis; (R)-pantothenate biosynthesis; beta-alanine from L-aspartate: step 1/1. In terms of biological role, catalyzes the pyruvoyl-dependent decarboxylation of aspartate to produce beta-alanine. This is Aspartate 1-decarboxylase from Thermotoga sp. (strain RQ2).